We begin with the raw amino-acid sequence, 241 residues long: Carboxy-S-adenosyl-L-methionine synthase (241 aa).

Residues Tyr-38, 63-65 (GCS), 88-89 (DN), 116-117 (DI), Asn-131, and Arg-198 each bind S-adenosyl-L-methionine.

This sequence belongs to the class I-like SAM-binding methyltransferase superfamily. Cx-SAM synthase family. In terms of assembly, homodimer.

It catalyses the reaction prephenate + S-adenosyl-L-methionine = carboxy-S-adenosyl-L-methionine + 3-phenylpyruvate + H2O. Its function is as follows. Catalyzes the conversion of S-adenosyl-L-methionine (SAM) to carboxy-S-adenosyl-L-methionine (Cx-SAM). This is Carboxy-S-adenosyl-L-methionine synthase from Actinobacillus pleuropneumoniae serotype 3 (strain JL03).